The following is a 418-amino-acid chain: Serine hydroxymethyltransferase (418 aa).

Residues Leu120 and Gly124–Leu126 each bind (6S)-5,6,7,8-tetrahydrofolate. Lys229 carries the N6-(pyridoxal phosphate)lysine modification. Residue Ser353–Phe355 coordinates (6S)-5,6,7,8-tetrahydrofolate.

It belongs to the SHMT family. Homodimer. The cofactor is pyridoxal 5'-phosphate.

The protein resides in the cytoplasm. The catalysed reaction is (6R)-5,10-methylene-5,6,7,8-tetrahydrofolate + glycine + H2O = (6S)-5,6,7,8-tetrahydrofolate + L-serine. It functions in the pathway one-carbon metabolism; tetrahydrofolate interconversion. The protein operates within amino-acid biosynthesis; glycine biosynthesis; glycine from L-serine: step 1/1. In terms of biological role, catalyzes the reversible interconversion of serine and glycine with tetrahydrofolate (THF) serving as the one-carbon carrier. This reaction serves as the major source of one-carbon groups required for the biosynthesis of purines, thymidylate, methionine, and other important biomolecules. Also exhibits THF-independent aldolase activity toward beta-hydroxyamino acids, producing glycine and aldehydes, via a retro-aldol mechanism. The polypeptide is Serine hydroxymethyltransferase (Psychrobacter sp. (strain PRwf-1)).